A 497-amino-acid polypeptide reads, in one-letter code: POU domain, class 3, transcription factor 3 (497 aa).

The span at 31–51 (GGGGGGGGGGGGAGGGGGGMQ) shows a compositional bias: gly residues. Disordered regions lie at residues 31-62 (GGGG…SGAY), 121-189 (WSGS…WGAA), 230-316 (NGML…TPTS), and 458-497 (EKRM…TSVQ). Composition is skewed to pro residues over residues 133 to 145 (QQPP…PPQG) and 170 to 180 (HLGPPPPPPHQ). Residues 240-250 (GGGGGGAGGGA) are compositionally biased toward gly residues. The span at 269 to 286 (HHHHHHHHAHPHPPHPHH) shows a compositional bias: basic residues. In terms of domain architecture, POU-specific spans 311-385 (EDTPTSDDLE…LLNKWLEEAD (75 aa)). Residues 403–462 (KRKKRTSIEVSVKGALESHFLKCPKPSAQEITNLADSLQLEKEVVRVWFCNRRQKEKRMT) constitute a DNA-binding region (homeobox). Polar residues predominate over residues 465 to 483 (GIQQQTPDDVYSQVGTVSA).

The protein belongs to the POU transcription factor family. Class-3 subfamily. Homodimer. Brain.

The protein resides in the nucleus. In terms of biological role, transcription factor that acts synergistically with SOX11 and SOX4. Plays a role in neuronal development. Is implicated in an enhancer activity at the embryonic met-mesencephalic junction; the enhancer element contains the octamer motif (5'-ATTTGCAT-3'). The polypeptide is POU domain, class 3, transcription factor 3 (Pou3f3) (Rattus norvegicus (Rat)).